Consider the following 242-residue polypeptide: Uridylate kinase (242 aa).

Lys12–Gly15 provides a ligand contact to ATP. An involved in allosteric activation by GTP region spans residues Gly20 to Gly25. UMP is bound at residue Gly54. The ATP site is built by Gly55 and Arg59. UMP-binding positions include Asp74 and Thr135–Thr142. The ATP site is built by Thr162, Tyr168, and Asp171.

It belongs to the UMP kinase family. As to quaternary structure, homohexamer.

The protein localises to the cytoplasm. The enzyme catalyses UMP + ATP = UDP + ADP. Its pathway is pyrimidine metabolism; CTP biosynthesis via de novo pathway; UDP from UMP (UMPK route): step 1/1. With respect to regulation, allosterically activated by GTP. Inhibited by UTP. Its function is as follows. Catalyzes the reversible phosphorylation of UMP to UDP. This is Uridylate kinase from Pasteurella multocida (strain Pm70).